The primary structure comprises 545 residues: CTP synthase (545 aa).

Positions 1 to 266 (MTTNYIFVTG…DDYICKRFSL (266 aa)) are amidoligase domain. Residue Ser14 participates in CTP binding. Ser14 contacts UTP. ATP is bound by residues 15 to 20 (SLGKGI) and Asp72. Asp72 and Glu140 together coordinate Mg(2+). CTP contacts are provided by residues 147–149 (DIE), 187–192 (KTKPTQ), and Lys223. Residues 187-192 (KTKPTQ) and Lys223 each bind UTP. Residue 239–241 (KDV) participates in ATP binding. One can recognise a Glutamine amidotransferase type-1 domain in the interval 291–542 (TIGMVGKYIE…VKAASEYQKR (252 aa)). Position 352 (Gly352) interacts with L-glutamine. The active-site Nucleophile; for glutamine hydrolysis is the Cys379. L-glutamine is bound by residues 380–383 (LGMQ), Glu403, and Arg470. Active-site residues include His515 and Glu517.

Belongs to the CTP synthase family. As to quaternary structure, homotetramer.

The catalysed reaction is UTP + L-glutamine + ATP + H2O = CTP + L-glutamate + ADP + phosphate + 2 H(+). It catalyses the reaction L-glutamine + H2O = L-glutamate + NH4(+). The enzyme catalyses UTP + NH4(+) + ATP = CTP + ADP + phosphate + 2 H(+). It functions in the pathway pyrimidine metabolism; CTP biosynthesis via de novo pathway; CTP from UDP: step 2/2. Its activity is regulated as follows. Allosterically activated by GTP, when glutamine is the substrate; GTP has no effect on the reaction when ammonia is the substrate. The allosteric effector GTP functions by stabilizing the protein conformation that binds the tetrahedral intermediate(s) formed during glutamine hydrolysis. Inhibited by the product CTP, via allosteric rather than competitive inhibition. In terms of biological role, catalyzes the ATP-dependent amination of UTP to CTP with either L-glutamine or ammonia as the source of nitrogen. Regulates intracellular CTP levels through interactions with the four ribonucleotide triphosphates. The chain is CTP synthase from Klebsiella pneumoniae (strain 342).